The following is a 20-amino-acid chain: Protein PR-L1 (20 aa).

The protein belongs to the BetVI family.

This is Protein PR-L1 from Lupinus luteus (European yellow lupine).